Here is a 247-residue protein sequence, read N- to C-terminus: Phycocyanobilin:ferredoxin oxidoreductase (247 aa).

This sequence belongs to the HY2 family.

The enzyme catalyses (2R,3Z)-phycocyanobilin + 4 oxidized [2Fe-2S]-[ferredoxin] = biliverdin IXalpha + 4 reduced [2Fe-2S]-[ferredoxin] + 4 H(+). Functionally, catalyzes the four-electron reduction of biliverdin IX-alpha (2-electron reduction at both the A and D rings); the reaction proceeds via an isolatable 2-electron intermediate, 181,182-dihydrobiliverdin. The protein is Phycocyanobilin:ferredoxin oxidoreductase of Synechococcus sp. (strain CC9605).